We begin with the raw amino-acid sequence, 380 residues long: NF-kappa-B inhibitor-like protein 1 (380 aa).

A disordered region spans residues 1–34 (MSNPSPQVPEGEASTSVCRPKSSMASTSRRQRRE). The segment covering 13 to 28 (ASTSVCRPKSSMASTS) has biased composition (polar residues). ANK repeat units lie at residues 64–93 (GQPP…DPAH) and 97–133 (HGDT…IKNK). Disordered stretches follow at residues 131–167 (KNKD…EWRQ) and 185–293 (EDDA…RGSL). The residue at position 150 (S150) is a Phosphoserine. A compositionally biased stretch (acidic residues) spans 150-159 (SAEEEEEDEA). 2 stretches are compositionally biased toward basic and acidic residues: residues 204-221 (RMAR…ETEG) and 236-272 (RQQE…RDPV).

As to quaternary structure, interacts with CACTIN (via N-terminal domain); the interaction occurs in a pro-inflammatory-independent manner.

Its subcellular location is the nucleus. Its function is as follows. Involved in the regulation of innate immune response. Acts as negative regulator of Toll-like receptor and interferon-regulatory factor (IRF) signaling pathways. Contributes to the negative regulation of transcriptional activation of NF-kappa-B target genes in response to endogenous pro-inflammatory stimuli. The protein is NF-kappa-B inhibitor-like protein 1 (NFKBIL1) of Sus scrofa (Pig).